We begin with the raw amino-acid sequence, 804 residues long: Leucine--tRNA ligase (804 aa).

Residues 40–51 (PYPSGAGLHVGH) carry the 'HIGH' region motif. A 'KMSKS' region motif is present at residues 576 to 580 (KMSKS). Lysine 579 provides a ligand contact to ATP.

Belongs to the class-I aminoacyl-tRNA synthetase family.

The protein localises to the cytoplasm. The enzyme catalyses tRNA(Leu) + L-leucine + ATP = L-leucyl-tRNA(Leu) + AMP + diphosphate. The polypeptide is Leucine--tRNA ligase (Staphylococcus haemolyticus (strain JCSC1435)).